Reading from the N-terminus, the 227-residue chain is MEQIRPFSDNYLDRLRTVEEDDYNDWEGSSDTKTLYSSVSDSKIGHKKSFHKDGKGLFKTLRNFLSLKTNKVPKNRKFSLLKGSKCNNVEIKVFIRNNDKQSNVHNFKGKDSIHEAWSQYLIFDSMGLSPLIHISGEDKYKVLCLFSIWRRKLGKCSIFTVHDPDIQKKIKSILSYLWELSNTNDPPHVIVWHTAKGTNVMTMGPLGLKDEDLWNYANERSNLNGTT.

This is an uncharacterized protein from Schizosaccharomyces pombe (strain 972 / ATCC 24843) (Fission yeast).